Consider the following 382-residue polypeptide: DNA double-strand break repair protein Mre11 (382 aa).

Residues aspartate 8, histidine 10, aspartate 49, and aspartate 84 each contribute to the Mn(2+) site. Histidine 85 (proton donor) is an active-site residue. 3 residues coordinate Mn(2+): histidine 156, histidine 187, and histidine 189.

The protein belongs to the MRE11/RAD32 family. As to quaternary structure, homodimer. Forms a heterotetramer composed of two Mre11 subunits and two Rad50 subunits. Interacts with Rad50 and HerA. Mn(2+) is required as a cofactor.

Its activity is regulated as follows. Nuclease activity is regulated by Rad50. In terms of biological role, part of the Rad50/Mre11 complex, which is involved in the early steps of DNA double-strand break (DSB) repair. The complex may facilitate opening of the processed DNA ends to aid in the recruitment of HerA and NurA. Mre11 binds to DSB ends and has both double-stranded 3'-5' exonuclease activity and single-stranded endonuclease activity. Recruited immediately to chromosomal DNA after gamma irradiation, and remains DNA bound in the course of DNA repair. This chain is DNA double-strand break repair protein Mre11, found in Sulfolobus acidocaldarius (strain ATCC 33909 / DSM 639 / JCM 8929 / NBRC 15157 / NCIMB 11770).